The sequence spans 370 residues: Homoserine kinase (370 aa).

The transit peptide at Met-1–Arg-34 directs the protein to the chloroplast. Leu-143–Ala-154 is an ATP binding site.

It belongs to the GHMP kinase family. Homoserine kinase subfamily.

The protein localises to the plastid. Its subcellular location is the chloroplast stroma. The catalysed reaction is L-homoserine + ATP = O-phospho-L-homoserine + ADP + H(+). It participates in amino-acid biosynthesis; L-threonine biosynthesis; L-threonine from L-aspartate: step 4/5. In terms of biological role, catalyzes the ATP-dependent phosphorylation of L-homoserine to L-homoserine phosphate. Is specific for L-homoserine and cannot use other substrates such D-serine, L-serine, D-threonine and L-threonine, galactose or D-homoserine in vitro. Required for susceptibility to the downy mildew pathogen Hyaloperonospora parasitica. In Arabidopsis thaliana (Mouse-ear cress), this protein is Homoserine kinase (HSK).